Reading from the N-terminus, the 538-residue chain is Protein NRT1/ PTR FAMILY 5.11 (538 aa).

A run of 2 helical transmembrane segments spans residues 44-64 (FAYFGIASNLIMYLTGPLGES) and 74-94 (AWTGTVAFLPLLGGFLADSYL). Residue T99 is modified to Phosphothreonine. Helical transmembrane passes span 100 to 120 (IIISSSLYILGLGLLSFSTMI), 134 to 154 (TIFFFSLYLVAIGQGGYNPCI), 175 to 194 (SFFNWLMFGNCISILTTRLV), 204 to 224 (WSLGFGIPSVSMLLSLFLFLL), 308 to 328 (IPIWITSVVYTIVHAQSPTFF), 342 to 362 (GLLVPAATLQSFINLSVVVFI), 389 to 409 (IGTGIFLSILAMVLAALVETK), 424 to 444 (VWWLIPQYVIFGVSDMFTMVG), 463 to 483 (ALNLSIYGAGNYLSSFMISVI), and 507 to 527 (YFYWLLACLGFIGFAFYLWFA).

Belongs to the major facilitator superfamily. Proton-dependent oligopeptide transporter (POT/PTR) (TC 2.A.17) family. Expressed in shoots and roots.

The protein localises to the membrane. This is Protein NRT1/ PTR FAMILY 5.11 (NPF5.11) from Arabidopsis thaliana (Mouse-ear cress).